The primary structure comprises 333 residues: Adenosine deaminase (333 aa).

Residues His-12 and His-14 each coordinate Zn(2+). Positions 14, 16, and 170 each coordinate substrate. Residue His-197 coordinates Zn(2+). Glu-200 (proton donor) is an active-site residue. A Zn(2+)-binding site is contributed by Asp-278. Asp-279 is a binding site for substrate.

The protein belongs to the metallo-dependent hydrolases superfamily. Adenosine and AMP deaminases family. Adenosine deaminase subfamily. Zn(2+) serves as cofactor.

It carries out the reaction adenosine + H2O + H(+) = inosine + NH4(+). The enzyme catalyses 2'-deoxyadenosine + H2O + H(+) = 2'-deoxyinosine + NH4(+). In terms of biological role, catalyzes the hydrolytic deamination of adenosine and 2-deoxyadenosine. This chain is Adenosine deaminase, found in Salmonella paratyphi C (strain RKS4594).